Consider the following 328-residue polypeptide: Serine/threonine protein kinase RdoA (328 aa).

D201 acts as the Proton acceptor in catalysis. Residues N206 and D217 each coordinate Mg(2+). The active site involves D217.

This sequence belongs to the SrkA/RdoA protein kinase family. As to quaternary structure, monomer. Requires Mg(2+) as cofactor.

It localises to the cytoplasm. The enzyme catalyses L-seryl-[protein] + ATP = O-phospho-L-seryl-[protein] + ADP + H(+). It catalyses the reaction L-threonyl-[protein] + ATP = O-phospho-L-threonyl-[protein] + ADP + H(+). A protein kinase that (auto)phosphorylates on Ser and Thr residues, probably involved in the extracytoplasmic stress response. Probably acts to suppress the effects of stress linked to accumulation of reactive oxygen species. This is Serine/threonine protein kinase RdoA from Salmonella typhimurium (strain LT2 / SGSC1412 / ATCC 700720).